A 51-amino-acid chain; its full sequence is Large ribosomal subunit protein eL39 (51 aa).

It belongs to the eukaryotic ribosomal protein eL39 family.

This is Large ribosomal subunit protein eL39 (rpl39e) from Pyrobaculum aerophilum (strain ATCC 51768 / DSM 7523 / JCM 9630 / CIP 104966 / NBRC 100827 / IM2).